The sequence spans 286 residues: Undecaprenyl-diphosphatase (286 aa).

Helical transmembrane passes span 5 to 25 (WFIIKAIIIGIVEGITEFLPV), 55 to 75 (IDAFTMIIQLGAILAIVVLYW), 92 to 112 (SGFKFWLNIAVSAVPAGVLGL), 122 to 142 (LFNPGSVTAALIVGAIWMIFA), 185 to 205 (IIGAWIVGLSTVAAAEFSFFL), 229 to 249 (MHIVGLTVGFIVSFIVALIVV), and 264 to 284 (FAMYRILLGIVLIILSLFNVI).

Belongs to the UppP family.

The protein resides in the cell membrane. The enzyme catalyses di-trans,octa-cis-undecaprenyl diphosphate + H2O = di-trans,octa-cis-undecaprenyl phosphate + phosphate + H(+). Functionally, catalyzes the dephosphorylation of undecaprenyl diphosphate (UPP). Confers resistance to bacitracin. In Clostridium novyi (strain NT), this protein is Undecaprenyl-diphosphatase.